Consider the following 522-residue polypeptide: Monogalactosyldiacylglycerol synthase, chloroplastic (522 aa).

The N-terminal 98 residues, M1–G98, are a transit peptide targeting the chloroplast.

The protein belongs to the glycosyltransferase 28 family. As to quaternary structure, homodimer. Zn(2+) serves as cofactor.

The protein localises to the plastid. It localises to the chloroplast inner membrane. The catalysed reaction is a 1,2-diacyl-sn-glycerol + UDP-alpha-D-galactose = a 1,2-diacyl-3-O-(beta-D-galactosyl)-sn-glycerol + UDP + H(+). With respect to regulation, inhibited by ortho-phenanthroline and UDP (competitive inhibitor relatively to UDP-Gal only) and inactivated by citraconic anhydride, tert-butoxycarbonyl-L-methionine hydrosuccinimidyl ester (SLR) and N-ethylmaleimide (NEM). In terms of biological role, involved in the synthesis of the major structural component of photosynthetic membranes. The 1,2-diacylglycerol substrate preference is 18:2/18:2 &gt; 18:0/18:1 &gt; 18:1/18:1 &gt; 18:1/16:0 &gt; 16:0/18:2 &gt; 18:3/18:3 &gt; 16:0/18:1 &gt; 16:0/16:0 &gt; 18:0/18:0. This is Monogalactosyldiacylglycerol synthase, chloroplastic (MGD A) from Spinacia oleracea (Spinach).